Consider the following 151-residue polypeptide: Neuroglobin (151 aa).

The Globin domain maps to 1-149; it reads MERPEHELIR…VVQAMSRGWN (149 aa). Positions 64 and 96 each coordinate heme b.

This sequence belongs to the globin family. As to quaternary structure, monomer. Homodimer and homotetramer; disulfide-linked. Mainly monomeric but also detected as part of homodimers and homotetramers. Interacts with 14-3-3 proteins; regulates the phosphorylation of NGB. Could interact (ferrous form) with G-alpha(i) proteins (GTP-bound form). Phosphorylated during hypoxia by ERK1/ERK2. Phosphorylation regulates the heme pocket hexacoordination preventing the association of His-64 with the heme metal center. Thereby, promotes the access of dioxygen and nitrite to the heme and stimulates the nitrite reductase activity. Phosphorylation during hypoxia is stabilized by 14-3-3 proteins.

It is found in the cytoplasm. The protein resides in the cytosol. It localises to the mitochondrion matrix. It carries out the reaction Fe(III)-heme b-[protein] + nitric oxide + H2O = Fe(II)-heme b-[protein] + nitrite + 2 H(+). Its function is as follows. Monomeric globin with a bis-histidyl six-coordinate heme-iron atom through which it can bind dioxygen, carbon monoxide and nitric oxide. Could help transport oxygen and increase its availability to the metabolically active neuronal tissues, though its low quantity in tissues as well as its high affinity for dioxygen, which may limit its oxygen-releasing ability, argue against it. The ferrous/deoxygenated form exhibits a nitrite reductase activity and it could produce nitric oxide which in turn inhibits cellular respiration in response to hypoxia. In its ferrous/deoxygenated state, it may also exhibit GDI (Guanine nucleotide Dissociation Inhibitor) activity toward heterotrimeric G-alpha proteins, thereby regulating signal transduction to facilitate neuroprotective responses in the wake of hypoxia and associated oxidative stress. The polypeptide is Neuroglobin (Sus scrofa (Pig)).